The sequence spans 409 residues: Elongation factor Tu, chloroplastic (409 aa).

In terms of domain architecture, tr-type G spans 10–214 (KPHVNIGTIG…KIDEYIPTPE (205 aa)). The G1 stretch occupies residues 19-26 (GHVDHGKT). GTP is bound at residue 19 to 26 (GHVDHGKT). Thr-26 contributes to the Mg(2+) binding site. The tract at residues 60 to 64 (GITIN) is G2. The tract at residues 81 to 84 (DCPG) is G3. GTP-binding positions include 81 to 85 (DCPGH) and 136 to 139 (NKAD). Residues 136–139 (NKAD) are G4. Positions 174-176 (SAL) are G5.

The protein belongs to the TRAFAC class translation factor GTPase superfamily. Classic translation factor GTPase family. EF-Tu/EF-1A subfamily.

The protein localises to the plastid. Its subcellular location is the chloroplast. It catalyses the reaction GTP + H2O = GDP + phosphate + H(+). In terms of biological role, GTP hydrolase that promotes the GTP-dependent binding of aminoacyl-tRNA to the A-site of ribosomes during protein biosynthesis. This chain is Elongation factor Tu, chloroplastic (tufA), found in Rhodomonas salina (Cryptomonas salina).